The following is a 674-amino-acid chain: UvrABC system protein C (674 aa).

Residues 64–142 enclose the GIY-YIG domain; the sequence is NGPGVYRMLN…IKRLRPRFNV (79 aa). Residues 252 to 287 enclose the UVR domain; sequence QAVKATIASAMAEASENLDFERAALYRDRLAALSHV.

It belongs to the UvrC family. As to quaternary structure, interacts with UvrB in an incision complex.

The protein resides in the cytoplasm. The UvrABC repair system catalyzes the recognition and processing of DNA lesions. UvrC both incises the 5' and 3' sides of the lesion. The N-terminal half is responsible for the 3' incision and the C-terminal half is responsible for the 5' incision. The sequence is that of UvrABC system protein C from Rhizobium meliloti (strain 1021) (Ensifer meliloti).